Reading from the N-terminus, the 659-residue chain is Pseudouridylate synthase 7 homolog (659 aa).

Met1 carries the N-acetylmethionine modification. 2 stretches are compositionally biased toward polar residues: residues 1-10 (MEMTEMTSVS) and 39-54 (CPTT…SLPS). A disordered region spans residues 1-99 (MEMTEMTSVS…EEEEEEAESF (99 aa)). The residue at position 10 (Ser10) is a Phosphoserine. Residues 75–98 (PSEEEEEEDGLSEEEEEEEEEAES) show a composition bias toward acidic residues. A Phosphoserine modification is found at Ser125. Catalysis depends on Asp292, which acts as the Nucleophile. The TRUD domain maps to 368–578 (GFINYYGMQR…SGAYRKIIIR (211 aa)).

This sequence belongs to the pseudouridine synthase TruD family. In terms of assembly, interacts with SIRT1.

It is found in the nucleus. It carries out the reaction a uridine in tRNA = a pseudouridine in tRNA. The enzyme catalyses uridine(13) in tRNA = pseudouridine(13) in tRNA. It catalyses the reaction a uridine in mRNA = a pseudouridine in mRNA. Functionally, pseudouridylate synthase that catalyzes pseudouridylation of RNAs. Acts as a regulator of protein synthesis in embryonic stem cells by mediating pseudouridylation of RNA fragments derived from tRNAs (tRFs): pseudouridylated tRFs inhibit translation by targeting the translation initiation complex. Also catalyzes pseudouridylation of mRNAs: mediates pseudouridylation of mRNAs with the consensus sequence 5'-UGUAG-3'. Acts as a regulator of pre-mRNA splicing by mediating pseudouridylation of pre-mRNAs at locations associated with alternatively spliced regions. Pseudouridylation of pre-mRNAs near splice sites directly regulates mRNA splicing and mRNA 3'-end processing. In addition to mRNAs and tRNAs, binds other types of RNAs, such as snRNAs, Y RNAs and vault RNAs, suggesting that it can catalyze pseudouridylation of many RNA types. This is Pseudouridylate synthase 7 homolog from Bos taurus (Bovine).